Consider the following 770-residue polypeptide: Signal transducer and activator of transcription 3 (770 aa).

The residue at position 2 (A2) is an N-acetylalanine. N6-acetyllysine is present on residues K49 and K87. The short motif at 150–162 (DVRKRVQDLEQKM) is the Essential for nuclear import element. The region spanning 580-670 (WNEGYIMGFI…DATNILVSPL (91 aa)) is the SH2 domain. 3 positions are modified to allysine; alternate: K601, K615, and K631. 3 positions are modified to N6-acetyllysine; alternate: K601, K615, and K631. A Phosphotyrosine; by TYK2 modification is found at Y640. K685 is modified (allysine; alternate). At K685 the chain carries N6-acetyllysine; alternate. Y705 is modified (phosphotyrosine; by FER and PTK6). K707 carries the post-translational modification N6-acetyllysine. Phosphothreonine is present on T714. At S727 the chain carries Phosphoserine; by DYRK2, NLK, NEK6, IRAK1, RPS6KA5, ZIPK/DAPK3 and PKC/PRKCE.

The protein belongs to the transcription factor STAT family. In terms of assembly, forms a homodimer or a heterodimer with a related family member (at least STAT1). Component of a promoter-binding complex composed of STAT3, NFATC3 and NFATC4; complex formation is enhanced by calcineurin. Interacts with IL31RA, NCOA1, PELP1, SIPAR, SOCS7, STATIP1 and TMF1. Interacts with IL23R in presence of IL23. Interacts (via SH2 domain) with NLK. Interacts with ARL2BP; the interaction is enhanced by LIF and JAK1 expression. Interacts with KPNA4 and KPNA5; KPNA4 may be the primary mediator of nuclear import. Interacts with CAV2; the interaction is increased on insulin-induced tyrosine phosphorylation of CAV2 and leads to STAT3 activation. Interacts with ARL2BP; interaction is enhanced with ARL2. Interacts with NEK6. Binds to CDK9 when activated and nuclear. Interacts with BMX. Interacts with ZIPK/DAPK3. Interacts with PIAS3; the interaction occurs on stimulation by IL6, CNTF or OSM and inhibits the DNA binding activity of STAT3. In prostate cancer cells, interacts with PRKCE and promotes DNA binding activity of STAT3. Interacts with STMN3, antagonizing its microtubule-destabilizing activity. Interacts with the 'Lys-129' acetylated form of BIRC5/survivin. Interacts with FER. Interacts (via SH2 domain) with EIF2AK2/PKR (via the kinase catalytic domain). Interacts with FGFR4. Interacts with INPP5F; the interaction is independent of STAT3 Tyr-705 phosphorylation status. Interacts with OCIAD1. Interacts with OCIAD2. Interacts (unphosphorylated or phosphorylated at Ser-727) with PHB1. Interacts and may form heterodimers with NHLH1. Found in a complex with SLC39A6, SLC39A10 and with the 'Ser-727' phosphorylated form of STAT3 throughout mitosis. Interacts (when acetylated) with EP300 (via bromo domain); interaction takes place following STAT3 acetylation by EP300 and promotes enhanceosome assembly. Interacts (when acetylated) with BRD2 (via bromo domain); interaction promotes STAT3 recruitment to chromatin and T-helper Th17 cell differentiation. Interacts with FAM220A/SIPAR; the interaction occurs in both the nucleus and the cytoplasm, is enhanced by IL6 and promotes STAT3 dephosphorylation. Interacts in both unphosphorylated and phosphorylated forms with FAM220A but interacts preferentially in the phosphorylated form in the nucleus. Interacts with PTPN2; the interaction is promoted by FAM220A and leads to STAT3 dephosphorylation which negatively regulates STAT3 transcriptional activator activity. Activated through tyrosine phosphorylation by BMX. Tyrosine phosphorylated in response to IL6, IL11, CNTF, LIF, KITLG/SCF, CSF1, EGF, PDGF, IFN-alpha, LEP and OSM. Activated KIT promotes phosphorylation on tyrosine residues and subsequent translocation to the nucleus. Tyrosine phosphorylated in response to constitutively activated FGFR1, FGFR2, FGFR3 and FGFR4. Phosphorylated on serine upon DNA damage, probably by ATM or ATR. Serine phosphorylation is important for the formation of stable DNA-binding STAT3 homodimers and maximal transcriptional activity. ARL2BP may participate in keeping the phosphorylated state of STAT3 within the nucleus. Tyrosine phosphorylated upon stimulation with EGF. Upon LPS challenge, phosphorylated within the nucleus by IRAK1. Upon UV-A treatment, phosphorylated on Ser-727 by RPS6KA5. Dephosphorylation on tyrosine residues by PTPN2 negatively regulates IL6/interleukin-6 signaling. Phosphorylation at Tyr-705 by PTK6, isoform M2 of PKM (PKM2) or FER leads to an increase of its transcriptional activity. Phosphorylation at Tyr-705 is increased in the presence of calcineurin. Phosphorylation at Tyr-640 by TYK2 negatively regulates transcriptional activity. Post-translationally, acetylated on lysine residues by EP300/p300, promoting its activation. Acetylation at Lys-49 and Lys-87 by EP300/p300 promotes its activation. Acetylation at Lys-87 by EP300/p300 promotes its association with BRD2 and recruitment to chromatin. Deacetylated at Lys-49 and Lys-87 by HDAC1. Acetylation at Lys-685 by EP300/p300 promotes its homodimerization and activation. Deacetylated at Lys-685 by HDAC3. Acetylated on lysine residues by CREBBP. Deacetylation by LOXL3 leads to disrupt STAT3 dimerization and inhibit STAT3 transcription activity. Oxidation of lysine residues to allysine on STAT3 preferentially takes place on lysine residues that are acetylated. In terms of processing, some lysine residues are oxidized to allysine by LOXL3, leading to disrupt STAT3 dimerization and inhibit STAT3 transcription activity. Oxidation of lysine residues to allysine on STAT3 preferentially takes place on lysine residues that are acetylated. (Microbial infection) Phosphorylated on Tyr-705 in the presence of S.typhimurium SarA. Expressed in ventricular cardiomyocytes (at protein level). Expressed in the lung (at protein level). Expressed in the liver, spleen and kidney. In terms of tissue distribution, expressed in the liver.

It localises to the cytoplasm. The protein localises to the nucleus. Functionally, signal transducer and transcription activator that mediates cellular responses to interleukins, KITLG/SCF, LEP and other growth factors. Once activated, recruits coactivators, such as NCOA1 or MED1, to the promoter region of the target gene. May mediate cellular responses to activated FGFR1, FGFR2, FGFR3 and FGFR4. Upon activation of IL6ST/gp130 signaling by interleukin-6 (IL6), binds to the IL6-responsive elements identified in the promoters of various acute-phase protein genes. Activated by IL31 through IL31RA. Acts as a regulator of inflammatory response by regulating differentiation of naive CD4(+) T-cells into T-helper Th17 or regulatory T-cells (Treg): acetylation promotes its transcription activity and cell differentiation while deacetylation and oxidation of lysine residues by LOXL3 inhibits differentiation. Involved in cell cycle regulation by inducing the expression of key genes for the progression from G1 to S phase, such as CCND1. Mediates the effects of LEP on melanocortin production, body energy homeostasis and lactation. May play an apoptotic role by transctivating BIRC5 expression under LEP activation. Cytoplasmic STAT3 represses macroautophagy by inhibiting EIF2AK2/PKR activity. Plays a crucial role in basal beta cell functions, such as regulation of insulin secretion. Following JAK/STAT signaling activation and as part of a complex with NFATC3 and NFATC4, binds to the alpha-beta E4 promoter region of CRYAB and activates transcription in cardiomyocytes. Plays an important role in host defense in methicillin-resistant S.aureus lung infection by regulating the expression of the antimicrobial lectin REG3G. In Mus musculus (Mouse), this protein is Signal transducer and activator of transcription 3.